A 206-amino-acid polypeptide reads, in one-letter code: Pyrrolidone-carboxylate peptidase (206 aa).

Active-site residues include E78, C141, and H165.

This sequence belongs to the peptidase C15 family. In terms of assembly, homotetramer.

The protein localises to the cytoplasm. The enzyme catalyses Release of an N-terminal pyroglutamyl group from a polypeptide, the second amino acid generally not being Pro.. Removes 5-oxoproline from various penultimate amino acid residues except L-proline. This Thermococcus kodakarensis (strain ATCC BAA-918 / JCM 12380 / KOD1) (Pyrococcus kodakaraensis (strain KOD1)) protein is Pyrrolidone-carboxylate peptidase.